We begin with the raw amino-acid sequence, 163 residues long: Large ribosomal subunit protein uL15 (163 aa).

Belongs to the universal ribosomal protein uL15 family. As to quaternary structure, part of the 50S ribosomal subunit.

In terms of biological role, binds to the 23S rRNA. This chain is Large ribosomal subunit protein uL15, found in Orientia tsutsugamushi (strain Boryong) (Rickettsia tsutsugamushi).